A 429-amino-acid chain; its full sequence is Serine--tRNA ligase (429 aa).

An L-serine-binding site is contributed by 236-238 (TAE). 267–269 (RRE) serves as a coordination point for ATP. Residue Glu-290 coordinates L-serine. 354–357 (EISS) lines the ATP pocket. Ser-390 contacts L-serine.

It belongs to the class-II aminoacyl-tRNA synthetase family. Type-1 seryl-tRNA synthetase subfamily. Homodimer. The tRNA molecule binds across the dimer.

The protein resides in the cytoplasm. It carries out the reaction tRNA(Ser) + L-serine + ATP = L-seryl-tRNA(Ser) + AMP + diphosphate + H(+). It catalyses the reaction tRNA(Sec) + L-serine + ATP = L-seryl-tRNA(Sec) + AMP + diphosphate + H(+). It functions in the pathway aminoacyl-tRNA biosynthesis; selenocysteinyl-tRNA(Sec) biosynthesis; L-seryl-tRNA(Sec) from L-serine and tRNA(Sec): step 1/1. Its function is as follows. Catalyzes the attachment of serine to tRNA(Ser). Is also able to aminoacylate tRNA(Sec) with serine, to form the misacylated tRNA L-seryl-tRNA(Sec), which will be further converted into selenocysteinyl-tRNA(Sec). This chain is Serine--tRNA ligase, found in Gloeobacter violaceus (strain ATCC 29082 / PCC 7421).